Reading from the N-terminus, the 1014-residue chain is Klotho (1014 aa).

A signal peptide spans 1-34 (MLARAPPRRPPRLVLLRLLLLHLLLLALRARCLS). Topologically, residues 35–982 (AEPGQGAQTW…TECGFFQTRK (948 aa)) are extracellular. 2 glycosyl hydrolase-1 regions span residues 59 to 508 (LHDT…DNGF) and 517 to 955 (LEGT…SNGF). Residues Asn161, Asn285, Asn346, Asn609, Asn614, and Asn696 are each glycosylated (N-linked (GlcNAc...) asparagine). Residues 983 to 1003 (SLLVFISFLVFTFIISLALIF) traverse the membrane as a helical segment. The Cytoplasmic portion of the chain corresponds to 1004–1014 (HYSKKGQRSYK).

Belongs to the glycosyl hydrolase 1 family. Klotho subfamily. As to quaternary structure, homodimer. Interacts with FGF23 and FGFR1. In terms of processing, N-glycosylated. Membrane-bound protein is present in distal renal tubules, inner ear, ependymal cells of brain choroid plexus, elongating spermatids and mature oocytes (at protein level). Soluble peptide is present in serum (100 pM) and cerebrospinal fluid. Expressed strongly in kidney, moderately in brain choroid plexus, and at low levels in pituitary, placenta, skeletal muscle, urinary bladder, aorta, pancreas, testis, ovary, colon, thyroid gland and adipocytes.

It localises to the cell membrane. The protein resides in the apical cell membrane. Its subcellular location is the secreted. It catalyses the reaction a beta-D-glucuronoside + H2O = D-glucuronate + an alcohol. Inhibited by D-saccharic acid 1,4-lactone and taurocholic acid. May have weak glycosidase activity towards glucuronylated steroids. However, it lacks essential active site Glu residues at positions 241 and 874, suggesting it may be inactive as a glycosidase in vivo. May be involved in the regulation of calcium and phosphorus homeostasis by inhibiting the synthesis of active vitamin D. Essential factor for the specific interaction between FGF23 and FGFR1. Functionally, the Klotho peptide generated by cleavage of the membrane-bound isoform may be an anti-aging circulating hormone which would extend life span by inhibiting insulin/IGF1 signaling. The protein is Klotho (Kl) of Mus musculus (Mouse).